Consider the following 215-residue polypeptide: ATP-dependent Clp protease proteolytic subunit 1 (215 aa).

The active-site Nucleophile is the Ser108. The active site involves His133.

This sequence belongs to the peptidase S14 family. As to quaternary structure, fourteen ClpP subunits assemble into 2 heptameric rings which stack back to back to give a disk-like structure with a central cavity, resembling the structure of eukaryotic proteasomes.

The protein localises to the cytoplasm. It carries out the reaction Hydrolysis of proteins to small peptides in the presence of ATP and magnesium. alpha-casein is the usual test substrate. In the absence of ATP, only oligopeptides shorter than five residues are hydrolyzed (such as succinyl-Leu-Tyr-|-NHMec, and Leu-Tyr-Leu-|-Tyr-Trp, in which cleavage of the -Tyr-|-Leu- and -Tyr-|-Trp bonds also occurs).. In terms of biological role, cleaves peptides in various proteins in a process that requires ATP hydrolysis. Has a chymotrypsin-like activity. Plays a major role in the degradation of misfolded proteins. The chain is ATP-dependent Clp protease proteolytic subunit 1 from Paraburkholderia xenovorans (strain LB400).